We begin with the raw amino-acid sequence, 129 residues long: DNA-directed RNA polymerase III subunit rpc9 (129 aa).

Belongs to the eukaryotic RPC9 RNA polymerase subunit family. As to quaternary structure, component of the RNA polymerase III (Pol III) complex.

The protein localises to the cytoplasm. The protein resides in the nucleus. In terms of biological role, DNA-dependent RNA polymerase catalyzes the transcription of DNA into RNA using the four ribonucleoside triphosphates as substrates. Specific peripheric component of RNA polymerase III which synthesizes small RNAs, such as 5S rRNA and tRNAs. The polypeptide is DNA-directed RNA polymerase III subunit rpc9 (rpc17) (Schizosaccharomyces pombe (strain 972 / ATCC 24843) (Fission yeast)).